Consider the following 338-residue polypeptide: RNA 3'-terminal phosphate cyclase (338 aa).

ATP-binding positions include Gln-103 and 283-287 (YLADQ). Catalysis depends on His-308, which acts as the Tele-AMP-histidine intermediate.

It belongs to the RNA 3'-terminal cyclase family. Type 1 subfamily.

The protein resides in the cytoplasm. It carries out the reaction a 3'-end 3'-phospho-ribonucleotide-RNA + ATP = a 3'-end 2',3'-cyclophospho-ribonucleotide-RNA + AMP + diphosphate. In terms of biological role, catalyzes the conversion of 3'-phosphate to a 2',3'-cyclic phosphodiester at the end of RNA. The mechanism of action of the enzyme occurs in 3 steps: (A) adenylation of the enzyme by ATP; (B) transfer of adenylate to an RNA-N3'P to produce RNA-N3'PP5'A; (C) and attack of the adjacent 2'-hydroxyl on the 3'-phosphorus in the diester linkage to produce the cyclic end product. The biological role of this enzyme is unknown but it is likely to function in some aspects of cellular RNA processing. The sequence is that of RNA 3'-terminal phosphate cyclase from Escherichia coli O7:K1 (strain IAI39 / ExPEC).